Reading from the N-terminus, the 317-residue chain is Non-structural protein 2 (317 aa).

Residues 107 to 109 (SVR), lysine 188, and 221 to 223 (HGK) each bind ATP. The segment at 205 to 241 (LVAELRWQYNRFAVITHGKGHYRVVKYSSVANHADRV) is RNA-binding. Catalysis depends on histidine 225, which acts as the For NTPase and RTPase activities. An ATP-binding site is contributed by arginine 227.

It belongs to the rotavirus NSP2 family. As to quaternary structure, homooctamer. Interacts with VP1; this interaction is weak. Interacts with NSP5; this interaction leads to up-regulation of NSP5 phosphorylation and formation of viral factories. Interacts with host DCP1A, DCP1B, DDX6, EDC4 and EIF2S1/eIF2-alpha; these interactions are probably part of the sequestration of some host SGs and PBs proteins in viral factories. Mg(2+) is required as a cofactor.

The protein localises to the host cytoplasm. Functionally, participates in replication and packaging of the viral genome. Plays a crucial role, together with NSP5, in the formation of virus factories (viroplasms), which are large inclusions in the host cytoplasm where replication intermediates are assembled and viral RNA replication takes place. Displays ssRNA binding, NTPase, RNA triphosphatase (RTPase) and ATP-independent helix-unwinding activities. The unwinding activity may prepare and organize plus-strand RNAs for packaging and replication by removing interfering secondary structures. The RTPase activity plays a role in the removal of the gamma-phosphate from the rotavirus RNA minus strands of dsRNA genome segments. Participates in the selective exclusion of host proteins from stress granules (SG) and P bodies (PB). Also participates in the sequestration of these remodeled organelles in viral factories. The protein is Non-structural protein 2 of Rotavirus A (strain RVA/Human/United States/P/1974/G3P1A[8]) (RV-A).